A 206-amino-acid chain; its full sequence is MPDAAHAAVPGDLVELGRINGAYGVKGWVKVQPHSAQADVLRKASSWWLTRLVPEKARGVVASAPQEYKVVQARPQGASVVAQLAGITDRDQAEALRGLAVQVSRSQFPAAADDEYYWVDLIGCAFYTNAEGEPARVGVVEEVFDNGAHAILRVVLQRAPAPGGEPEPRRDAKGRPLEMLVPFVGAHILAVDLSARRIDSNWPTEL.

A PRC barrel domain is found at 113–206 (DDEYYWVDLI…RIDSNWPTEL (94 aa)).

The protein belongs to the RimM family. Binds ribosomal protein uS19.

The protein localises to the cytoplasm. In terms of biological role, an accessory protein needed during the final step in the assembly of 30S ribosomal subunit, possibly for assembly of the head region. Essential for efficient processing of 16S rRNA. May be needed both before and after RbfA during the maturation of 16S rRNA. It has affinity for free ribosomal 30S subunits but not for 70S ribosomes. The protein is Ribosome maturation factor RimM of Bordetella petrii (strain ATCC BAA-461 / DSM 12804 / CCUG 43448).